A 387-amino-acid chain; its full sequence is MKRTRIEDDFNPVYPYDTSSTPSIPYVAPPFVSSDGLQENPPGVLALKYTDPITTNAKHELTLKLGSNITLQNGLLSATVPTVSPPLTNSNNSLGLATSAPIAVSANSLTLATAAPLTVSNNQLSINTGRGLVITNNAVAVNPTGALGFNNTGALQLNAAGGMRVDGANLILHVAYPFEAINQLTLRLENGLEVTNGGKLNVKLGSGLQFDNNGRITISNRIQTRGVTSLTTIWSISPTPNCSIYETQDANLFLCLTKNGAHVLGTITIKGLKGALREMNDNALSVKLPFDNQGNLLNCALESSTWRYQETNAVASNALTFMPNSTVYPRNKTADPGNMLIQISPNITFSVVYNEINSGYAFTFKWSAEPGKPFHPPTAVFCYITEQ.

This sequence belongs to the adenoviridae fiber family. Homotrimer. Interacts with host receptor CXCAR. Interacts (via N-terminal tail region) with pentons.

The protein localises to the virion. It is found in the host nucleus. Its function is as follows. Forms spikes that protrude from each vertex of the icosahedral capsid. Interacts with host receptor CXCAR to provide virion initial attachment to target cell. Fiber proteins are shed during virus entry, when virus is still at the cell surface. The polypeptide is Fiber protein 2 (Homo sapiens (Human)).